A 116-amino-acid polypeptide reads, in one-letter code: Ribosome-binding factor A (116 aa).

This sequence belongs to the RbfA family. In terms of assembly, monomer. Binds 30S ribosomal subunits, but not 50S ribosomal subunits or 70S ribosomes.

Its subcellular location is the cytoplasm. Its function is as follows. One of several proteins that assist in the late maturation steps of the functional core of the 30S ribosomal subunit. Associates with free 30S ribosomal subunits (but not with 30S subunits that are part of 70S ribosomes or polysomes). Required for efficient processing of 16S rRNA. May interact with the 5'-terminal helix region of 16S rRNA. This is Ribosome-binding factor A from Malacoplasma penetrans (strain HF-2) (Mycoplasma penetrans).